The chain runs to 630 residues: Replication protein A 70 kDa DNA-binding subunit B (630 aa).

The OB DNA-binding region spans 200-282 (IIKVRVTSKG…KTVHNDYEMT (83 aa)). Residues 496 to 516 (CKTCNKKVTEAIGSGYWCEGC) form a C4-type zinc finger.

This sequence belongs to the replication factor A protein 1 family. As to quaternary structure, heterotrimer of RPA1, RPA2 and RPA3 (canonical replication protein A complex). Interacts with RPA2A. Expressed in root tips, roots, shoot apical meristem (SAM) and young leaves, and at lower levels in mature leaves, flag leaves and ears.

It localises to the nucleus. In terms of biological role, component of the replication protein A complex (RPA) required for DNA recombination, repair and replication. The activity of RPA is mediated by single-stranded DNA binding and protein interactions. Probably involved in repair of double-strand DNA breaks (DSBs) induced by genotoxic stresses. The sequence is that of Replication protein A 70 kDa DNA-binding subunit B (RPA1B) from Oryza sativa subsp. japonica (Rice).